The following is a 60-amino-acid chain: MVKEKYTRFERARIVGARALQIAMGAPVLVDDDGRLDPLGVAIAELKAEIIPITVKRKKS.

It belongs to the archaeal Rpo6/eukaryotic RPB6 RNA polymerase subunit family. As to quaternary structure, part of the RNA polymerase complex.

Its subcellular location is the cytoplasm. The enzyme catalyses RNA(n) + a ribonucleoside 5'-triphosphate = RNA(n+1) + diphosphate. DNA-dependent RNA polymerase (RNAP) catalyzes the transcription of DNA into RNA using the four ribonucleoside triphosphates as substrates. This chain is DNA-directed RNA polymerase subunit Rpo6, found in Methanosarcina acetivorans (strain ATCC 35395 / DSM 2834 / JCM 12185 / C2A).